The chain runs to 331 residues: N-acetyl-alpha-D-glucosaminyl-diphospho-ditrans,octacis-undecaprenol 4-epimerase (331 aa).

NAD(+) is bound by residues 13-14 (FV), 34-39 (QQSHFY), 47-48 (DV), Ser-109, Tyr-132, and Lys-136. Substrate is bound by residues Ser-109 and Tyr-132. Tyr-132 (proton acceptor) is an active-site residue. Residues 183-184 (GK) and 199-201 (YVG) contribute to the substrate site.

It belongs to the NAD(P)-dependent epimerase/dehydratase family. NAD(+) serves as cofactor.

The protein resides in the cell membrane. The catalysed reaction is N-acetyl-alpha-D-glucosaminyl-di-trans,octa-cis-undecaprenyl diphosphate = N-acetyl-alpha-D-galactosaminyl-di-trans,octa-cis-undecaprenyl diphosphate. It participates in bacterial outer membrane biogenesis; LPS O-antigen biosynthesis. Functionally, involved in biosynthesis of the repeating tetrasaccharide unit of the O-antigen. Catalyzes the reversible epimerization of the hydroxyl group at position C4 of undecaprenyl pyrophosphate-N-acetylglucosamine (UndPP-GlcNAc) to yield undecaprenyl pyrophosphate-N-acetylgalactosamine (UndPP-GalNAc). This chain is N-acetyl-alpha-D-glucosaminyl-diphospho-ditrans,octacis-undecaprenol 4-epimerase, found in Escherichia coli O157:H7.